The primary structure comprises 747 residues: ATPase family gene 2 protein homolog B (747 aa).

At Met1 the chain carries N-acetylmethionine. ATP contacts are provided by residues 234 to 241 and 500 to 507; these read GPPGVGKT and GPPGCAKT.

Belongs to the AAA ATPase family. AFG2 subfamily. As to quaternary structure, part of the 55LCC heterohexameric ATPase complex composed at least of AIRIM, AFG2A, AFG2B and CINP. Associates with pre-60S ribosomal particles. In adult ear, expressed at low levels in neurosensory hair cells (inner and outer) and supporting cells (pillar and Deiter cells).

Its subcellular location is the cytoplasm. The protein resides in the cytoskeleton. It is found in the spindle. The protein localises to the nucleus. The catalysed reaction is ATP + H2O = ADP + phosphate + H(+). In the context of 55LCC heterohexameric ATPase complex, the ATPase activity is stimulated by DNA binding and inhibited in presence of RNA. Its function is as follows. ATP-dependent chaperone part of the 55LCC heterohexameric ATPase complex which is chromatin-associated and promotes replisome proteostasis to maintain replication fork progression and genome stability. Required for replication fork progression, sister chromatid cohesion, and chromosome stability. The ATPase activity is specifically enhanced by replication fork DNA and is coupled to cysteine protease-dependent cleavage of replisome substrates in response to replication fork damage. Uses ATPase activity to process replisome substrates in S-phase, facilitating their proteolytic turnover from chromatin to ensure DNA replication and mitotic fidelity. Plays an essential role in the cytoplasmic maturation steps of pre-60S ribosomal particles by promoting the release of shuttling protein RSL24D1/RLP24 from the pre-ribosomal particles. This chain is ATPase family gene 2 protein homolog B (Afg2b), found in Mus musculus (Mouse).